Consider the following 217-residue polypeptide: Uracil-DNA glycosylase (217 aa).

D62 functions as the Proton acceptor in the catalytic mechanism.

Belongs to the uracil-DNA glycosylase (UDG) superfamily. UNG family.

It is found in the cytoplasm. It carries out the reaction Hydrolyzes single-stranded DNA or mismatched double-stranded DNA and polynucleotides, releasing free uracil.. Its function is as follows. Excises uracil residues from the DNA which can arise as a result of misincorporation of dUMP residues by DNA polymerase or due to deamination of cytosine. The chain is Uracil-DNA glycosylase from Streptococcus equi subsp. zooepidemicus (strain H70).